We begin with the raw amino-acid sequence, 197 residues long: Transcription factor FapR (197 aa).

The protein belongs to the FapR family.

In terms of biological role, transcriptional factor involved in regulation of membrane lipid biosynthesis by repressing genes involved in fatty acid and phospholipid metabolism. The chain is Transcription factor FapR from Bacillus cereus (strain 03BB102).